Here is a 421-residue protein sequence, read N- to C-terminus: Ankyrin repeat and SOCS box protein 6 (421 aa).

ANK repeat units lie at residues 67–97 (EGVSNALLKMAELGLTRAADVLLRHGANLNF), 102–131 (TYYTALHIAVLRNQPDMVELLVHHGADVNR), 136–166 (HESSPLDLASEEPERLPCLQRLLDLGADVNA), 170–205 (HGKTALLHALASSDGVQIHNTENIRLLLEGGADVKA), 226–255 (GGDKEEAQMINRFCFQVTRLLLAHGADPSE), and 260–289 (ESLTHICLKSFKLHFPLLRFLLESGAAYNC). Residues 360 to 415 (ALHFSLRQLESYPPPLKHLCRVAIRLYLQPWPVDVKVKALPLPDRLKWYLLSEHSG) form the SOCS box domain.

The protein belongs to the ankyrin SOCS box (ASB) family. Binds APS. Identified in a complex with ELOB and ELOC. Interacts with CUL5 and RNF7. Interacts with SQSTM1. Ubiquitinated by RNF41; leading to proteasomal degradation.

It localises to the cytoplasm. It functions in the pathway protein modification; protein ubiquitination. Functionally, probable substrate-recognition component of a SCF-like ECS (Elongin-Cullin-SOCS-box protein) E3 ubiquitin-protein ligase complex which mediates the ubiquitination and subsequent proteasomal degradation of target proteins. May play a role in the regulation of cell proliferation and autophagy by promoting the ubiquitination and degradation of SQSTM1. The polypeptide is Ankyrin repeat and SOCS box protein 6 (ASB6) (Homo sapiens (Human)).